We begin with the raw amino-acid sequence, 557 residues long: Urease subunit alpha (557 aa).

Residues 130-557 form the Urease domain; the sequence is GFIDTHIHWV…LPLTQLYFIY (428 aa). Positions 135, 137, and 217 each coordinate Ni(2+). Lys-217 carries the N6-carboxylysine modification. Position 219 (His-219) interacts with substrate. Positions 246 and 272 each coordinate Ni(2+). His-320 functions as the Proton donor in the catalytic mechanism. Asp-360 serves as a coordination point for Ni(2+).

This sequence belongs to the metallo-dependent hydrolases superfamily. Urease alpha subunit family. As to quaternary structure, heterohexamer of 3 UreC (alpha) and 3 UreAB (gamma/beta) subunits. It depends on Ni cation as a cofactor. Post-translationally, carboxylation allows a single lysine to coordinate two nickel ions.

Its subcellular location is the cytoplasm. It catalyses the reaction urea + 2 H2O + H(+) = hydrogencarbonate + 2 NH4(+). The protein operates within nitrogen metabolism; urea degradation; CO(2) and NH(3) from urea (urease route): step 1/1. In Sulfurisphaera tokodaii (strain DSM 16993 / JCM 10545 / NBRC 100140 / 7) (Sulfolobus tokodaii), this protein is Urease subunit alpha.